Consider the following 57-residue polypeptide: Small ribosomal subunit protein bS21 (57 aa).

The protein belongs to the bacterial ribosomal protein bS21 family.

In Phytoplasma australiense, this protein is Small ribosomal subunit protein bS21.